The following is a 212-amino-acid chain: Kynurenine formamidase (212 aa).

Position 17 (Trp17) interacts with substrate. Zn(2+) contacts are provided by His48, His52, and Asp54. His58 serves as the catalytic Proton donor/acceptor. Zn(2+) contacts are provided by His161 and Glu173.

It belongs to the Cyclase 1 superfamily. KynB family. As to quaternary structure, homodimer. Zn(2+) serves as cofactor.

It catalyses the reaction N-formyl-L-kynurenine + H2O = L-kynurenine + formate + H(+). It participates in amino-acid degradation; L-tryptophan degradation via kynurenine pathway; L-kynurenine from L-tryptophan: step 2/2. Its function is as follows. Catalyzes the hydrolysis of N-formyl-L-kynurenine to L-kynurenine, the second step in the kynurenine pathway of tryptophan degradation. This chain is Kynurenine formamidase, found in Salinibacter ruber (strain DSM 13855 / M31).